Reading from the N-terminus, the 332-residue chain is Glyceraldehyde-3-phosphate dehydrogenase 2 (332 aa).

Arg-11, Ile-12, and Asp-33 together coordinate NAD(+). Glycyl lysine isopeptide (Lys-Gly) (interchain with G-Cter in ubiquitin) cross-links involve residues Lys-46 and Lys-63. Thr-120 contributes to the NAD(+) binding site. D-glyceraldehyde 3-phosphate-binding positions include 149–151 (SCT), Thr-180, 209–210 (TG), and Arg-232. Residue Cys-150 is the Nucleophile of the active site. Ser-302 carries the post-translational modification Phosphoserine. 2 residues coordinate NAD(+): Asn-314 and Tyr-318.

It belongs to the glyceraldehyde-3-phosphate dehydrogenase family. Homotetramer.

The protein localises to the cytoplasm. It carries out the reaction D-glyceraldehyde 3-phosphate + phosphate + NAD(+) = (2R)-3-phospho-glyceroyl phosphate + NADH + H(+). The catalysed reaction is NADH + H2O = (6R)-NADHX. The enzyme catalyses NADH + H2O = (6S)-NADHX. It catalyses the reaction NADPH + H2O = (6R)-NADPHX. It carries out the reaction NADPH + H2O = (6S)-NADPHX. It participates in carbohydrate degradation; glycolysis; pyruvate from D-glyceraldehyde 3-phosphate: step 1/5. Glyceraldehyde-3-phosphate dehydrogenase (GAPDH) involved in glycolysis and gluconeogenesis. Catalyzes the reaction of glyceraldehyde-3-phosphate to 1,3 bis-phosphoglycerate. The contribution of the TDH1, TDH2, and TDH3 to the total glyceraldehyde-3-phosphate dehydrogenase activity is 10-15, 25-30, and 50-60%, respectively. Functionally, as a side activity, catalyzes the hydration of the nicotinamide ring of NADH or NADPH at the C6 position to give the corresponding hydrates, NADHX and NADPHX, which exist as R and S epimers, that cannot act as electron donors or acceptors and inhibit several dehydrogenases, making them toxic. The chain is Glyceraldehyde-3-phosphate dehydrogenase 2 from Saccharomyces cerevisiae (strain ATCC 204508 / S288c) (Baker's yeast).